We begin with the raw amino-acid sequence, 228 residues long: Gliolectin (228 aa).

Residues methionine 1–arginine 120 are Cytoplasmic-facing. The helical; Signal-anchor for type II membrane protein transmembrane segment at glycine 121–leucine 137 threads the bilayer. Residues glutamine 138–glutamine 228 lie on the Extracellular side of the membrane. Positions proline 141–glutamine 228 are disordered. Residues asparagine 149, asparagine 156, asparagine 198, asparagine 199, asparagine 205, and asparagine 218 are each glycosylated (N-linked (GlcNAc...) asparagine). Residues asparagine 195 to asparagine 213 are compositionally biased toward low complexity. Residues asparagine 218–glutamine 228 are compositionally biased toward polar residues.

In terms of tissue distribution, expressed by a subset of glial cells found at the midline of the embryo stage 12 nervous system. Expression is highest during the formation of the embryonic axonal commissures, a process requiring midline glial cell function (at protein level).

The protein resides in the membrane. Its function is as follows. Has a role in intercellular carbohydrate-mediated cell adhesion. The chain is Gliolectin from Drosophila melanogaster (Fruit fly).